An 86-amino-acid polypeptide reads, in one-letter code: Large ribosomal subunit protein bL27 (86 aa).

Belongs to the bacterial ribosomal protein bL27 family.

This is Large ribosomal subunit protein bL27 from Christiangramia forsetii (strain DSM 17595 / CGMCC 1.15422 / KT0803) (Gramella forsetii).